We begin with the raw amino-acid sequence, 92 residues long: Small ribosomal subunit protein bS20 (92 aa).

Residues 1–28 (MANTASAEKRNRQAQKRRARNVQVRTGV) are disordered.

Belongs to the bacterial ribosomal protein bS20 family.

In terms of biological role, binds directly to 16S ribosomal RNA. This Anaeromyxobacter dehalogenans (strain 2CP-C) protein is Small ribosomal subunit protein bS20.